The sequence spans 1106 residues: Protein translocase subunit SecA (1106 aa).

Residues Q175, 193–197 (GEGKT), and D694 contribute to the ATP site. A disordered region spans residues 1021-1106 (QEAPADEQQP…KYKNCHGQNA (86 aa)). Positions 1042 to 1056 (QRQDMSKYREQKQDL) are enriched in basic and acidic residues. Over residues 1057–1067 (SDPNQQAAASQ) the composition is skewed to polar residues. Over residues 1068-1085 (DTREQQKREPIRAEKTVG) the composition is skewed to basic and acidic residues. Residues C1090, C1092, C1101, and H1102 each contribute to the Zn(2+) site.

It belongs to the SecA family. As to quaternary structure, monomer and homodimer. Part of the essential Sec protein translocation apparatus which comprises SecA, SecYEG and auxiliary proteins SecDF. Other proteins may also be involved. Requires Zn(2+) as cofactor.

Its subcellular location is the cell inner membrane. The protein resides in the cytoplasm. It catalyses the reaction ATP + H2O + cellular proteinSide 1 = ADP + phosphate + cellular proteinSide 2.. Part of the Sec protein translocase complex. Interacts with the SecYEG preprotein conducting channel. Has a central role in coupling the hydrolysis of ATP to the transfer of proteins into and across the cell membrane, serving as an ATP-driven molecular motor driving the stepwise translocation of polypeptide chains across the membrane. This is Protein translocase subunit SecA from Bacteroides thetaiotaomicron (strain ATCC 29148 / DSM 2079 / JCM 5827 / CCUG 10774 / NCTC 10582 / VPI-5482 / E50).